The following is a 439-amino-acid chain: Serine hydroxymethyltransferase (439 aa).

Residues leucine 119 and 123–125 (GHL) each bind (6S)-5,6,7,8-tetrahydrofolate. Residue lysine 228 is modified to N6-(pyridoxal phosphate)lysine. 370-372 (SPF) is a binding site for (6S)-5,6,7,8-tetrahydrofolate.

It belongs to the SHMT family. In terms of assembly, homodimer. Pyridoxal 5'-phosphate serves as cofactor.

The protein localises to the cytoplasm. It catalyses the reaction (6R)-5,10-methylene-5,6,7,8-tetrahydrofolate + glycine + H2O = (6S)-5,6,7,8-tetrahydrofolate + L-serine. It participates in one-carbon metabolism; tetrahydrofolate interconversion. The protein operates within amino-acid biosynthesis; glycine biosynthesis; glycine from L-serine: step 1/1. Functionally, catalyzes the reversible interconversion of serine and glycine with tetrahydrofolate (THF) serving as the one-carbon carrier. This reaction serves as the major source of one-carbon groups required for the biosynthesis of purines, thymidylate, methionine, and other important biomolecules. Also exhibits THF-independent aldolase activity toward beta-hydroxyamino acids, producing glycine and aldehydes, via a retro-aldol mechanism. The chain is Serine hydroxymethyltransferase from Chlorobium phaeobacteroides (strain BS1).